The following is a 38-amino-acid chain: Large ribosomal subunit protein bL36 (38 aa).

The protein belongs to the bacterial ribosomal protein bL36 family.

The polypeptide is Large ribosomal subunit protein bL36 (Hamiltonella defensa subsp. Acyrthosiphon pisum (strain 5AT)).